Reading from the N-terminus, the 193-residue chain is Xanthine phosphoribosyltransferase (193 aa).

Xanthine-binding residues include leucine 20 and asparagine 27. 5-phospho-alpha-D-ribose 1-diphosphate is bound at residue 129–133 (ANGKA). A xanthine-binding site is contributed by lysine 157.

The protein belongs to the purine/pyrimidine phosphoribosyltransferase family. Xpt subfamily. As to quaternary structure, homodimer.

It is found in the cytoplasm. The catalysed reaction is XMP + diphosphate = xanthine + 5-phospho-alpha-D-ribose 1-diphosphate. It functions in the pathway purine metabolism; XMP biosynthesis via salvage pathway; XMP from xanthine: step 1/1. In terms of biological role, converts the preformed base xanthine, a product of nucleic acid breakdown, to xanthosine 5'-monophosphate (XMP), so it can be reused for RNA or DNA synthesis. This is Xanthine phosphoribosyltransferase from Bifidobacterium adolescentis (strain ATCC 15703 / DSM 20083 / NCTC 11814 / E194a).